A 395-amino-acid polypeptide reads, in one-letter code: tRNA-specific 2-thiouridylase MnmA (395 aa).

ATP-binding positions include 7-14 and Met-33; that span reads GLSGGVDS. Positions 95-97 are interaction with target base in tRNA; sequence NPD. Cys-100 functions as the Nucleophile in the catalytic mechanism. The cysteines at positions 100 and 200 are disulfide-linked. ATP is bound at residue Gly-124. The tract at residues 150-152 is interaction with tRNA; it reads KDQ. The active-site Cysteine persulfide intermediate is the Cys-200. The tract at residues 346-347 is interaction with tRNA; sequence RY.

It belongs to the MnmA/TRMU family.

The protein resides in the cytoplasm. The catalysed reaction is S-sulfanyl-L-cysteinyl-[protein] + uridine(34) in tRNA + AH2 + ATP = 2-thiouridine(34) in tRNA + L-cysteinyl-[protein] + A + AMP + diphosphate + H(+). Catalyzes the 2-thiolation of uridine at the wobble position (U34) of tRNA, leading to the formation of s(2)U34. The protein is tRNA-specific 2-thiouridylase MnmA of Christiangramia forsetii (strain DSM 17595 / CGMCC 1.15422 / KT0803) (Gramella forsetii).